The primary structure comprises 200 residues: NADH-quinone oxidoreductase subunit C (200 aa).

The protein belongs to the complex I 30 kDa subunit family. As to quaternary structure, NDH-1 is composed of 14 different subunits. Subunits NuoB, C, D, E, F, and G constitute the peripheral sector of the complex.

The protein localises to the cell inner membrane. The catalysed reaction is a quinone + NADH + 5 H(+)(in) = a quinol + NAD(+) + 4 H(+)(out). Its function is as follows. NDH-1 shuttles electrons from NADH, via FMN and iron-sulfur (Fe-S) centers, to quinones in the respiratory chain. The immediate electron acceptor for the enzyme in this species is believed to be ubiquinone. Couples the redox reaction to proton translocation (for every two electrons transferred, four hydrogen ions are translocated across the cytoplasmic membrane), and thus conserves the redox energy in a proton gradient. The sequence is that of NADH-quinone oxidoreductase subunit C from Rhizobium leguminosarum bv. trifolii (strain WSM2304).